The sequence spans 359 residues: Type-1 angiotensin II receptor (359 aa).

Topologically, residues 1–25 are extracellular; it reads MVPNYSTEETVKRIHVDCPVSGRHS. Asn4 is a glycosylation site (N-linked (GlcNAc...) asparagine). Angiotensin II is bound at residue Asp17. Disulfide bonds link Cys18–Cys274 and Cys101–Cys180. A helical transmembrane segment spans residues 26–55; it reads YIYIMVPTVYSIIFIIGIFGNSLVVIVIYC. The Cytoplasmic portion of the chain corresponds to 56-61; it reads YMKLKT. Residues 62-89 form a helical membrane-spanning segment; the sequence is VASIFLLNLALADLCFLITLPLWAAYTA. At 90 to 98 the chain is on the extracellular side; it reads MEYQWPFGN. A helical transmembrane segment spans residues 99–125; it reads CLCKLASAGISFNLYASVFLLTCLSID. At 126 to 141 the chain is on the cytoplasmic side; sequence RYLAIVHPVKSRIRRT. The chain crosses the membrane as a helical span at residues 142-165; the sequence is MFVARVTCIVIWLLAGVASLPVII. The Extracellular segment spans residues 166–190; that stretch reads HRNIFFAENLNMTVCGFRYDNNNTT. An angiotensin II-binding site is contributed by Arg167. A glycan (N-linked (GlcNAc...) asparagine) is linked at Asn176. Angiotensin II contacts are provided by Phe182 and Tyr184. 2 N-linked (GlcNAc...) asparagine glycosylation sites follow: Asn187 and Asn188. A helical transmembrane segment spans residues 191 to 216; it reads LRVGLGLSKNLLGFLIPFLIILTSYT. Residue Lys199 participates in angiotensin II binding. The Cytoplasmic segment spans residues 217–239; sequence LIWKTLKKAYQIQRNKTRNDDIF. The chain crosses the membrane as a helical span at residues 240–268; sequence KMIVAIVFFFFFSWIPHQVFTFLDVLIQL. Topologically, residues 269-278 are extracellular; sequence HVITDCKITD. A helical membrane pass occupies residues 279–304; that stretch reads IVDTAMPFTICIAYFNNCLNPFFYVF. The Cytoplasmic segment spans residues 305-359; it reads FGKNFKKYFLQLIKYIPPNVSTHPSLTTKMSSLSYRPPENIRLPTKKTAGSFDAE.

It belongs to the G-protein coupled receptor 1 family. C-terminal Ser or Thr residues may be phosphorylated.

It localises to the cell membrane. In terms of biological role, receptor for angiotensin II, a vasoconstricting peptide, which acts as a key regulator of blood pressure and sodium retention by the kidney. The activated receptor in turn couples to G-alpha proteins G(q) (GNAQ, GNA11, GNA14 or GNA15) and thus activates phospholipase C and increases the cytosolic Ca(2+) concentrations, which in turn triggers cellular responses such as stimulation of protein kinase C. The polypeptide is Type-1 angiotensin II receptor (AGTR1) (Gallus gallus (Chicken)).